The primary structure comprises 130 residues: Large ribosomal subunit protein bL19 (130 aa).

Belongs to the bacterial ribosomal protein bL19 family.

Functionally, this protein is located at the 30S-50S ribosomal subunit interface and may play a role in the structure and function of the aminoacyl-tRNA binding site. In Psychrobacter arcticus (strain DSM 17307 / VKM B-2377 / 273-4), this protein is Large ribosomal subunit protein bL19.